The following is a 351-amino-acid chain: Large ribosomal subunit protein uL3 (351 aa).

Disordered regions lie at residues 1–31 (MGHR…TPRT) and 246–271 (KGSR…GQLG).

This sequence belongs to the universal ribosomal protein uL3 family. As to quaternary structure, part of the 50S ribosomal subunit. Forms a cluster with proteins L14 and L24e.

One of the primary rRNA binding proteins, it binds directly near the 3'-end of the 23S rRNA, where it nucleates assembly of the 50S subunit. The sequence is that of Large ribosomal subunit protein uL3 from Saccharolobus islandicus (strain Y.N.15.51 / Yellowstone #2) (Sulfolobus islandicus).